The following is an 85-amino-acid chain: Probable Sec-independent protein translocase protein TatE (85 aa).

The chain crosses the membrane as a helical span at residues 1-21; the sequence is MEGLSITKLLVVGILIVLLFG. A disordered region spans residues 64–85; the sequence is KTVAETKAASDSQAAASVERKD.

This sequence belongs to the TatA/E family. TatE subfamily.

It localises to the cell inner membrane. Functionally, part of the twin-arginine translocation (Tat) system that transports large folded proteins containing a characteristic twin-arginine motif in their signal peptide across membranes. TatE shares overlapping functions with TatA. This is Probable Sec-independent protein translocase protein TatE from Yersinia pestis.